Here is a 157-residue protein sequence, read N- to C-terminus: MRILGIDPGSRKCGYAIISHASNKLSLITAGFINITTTRLQEQILDLIEALDCLLDRYEVNEVAIEDIFFGYNPKSVIKLAQFRGALSLKILERIGNFSEYTPLQVKKALTGNGKAAKEQVAFMVKRLLNITSEIKPLDISDAIAVAITHAQRLKLH.

Catalysis depends on residues Asp-7, Glu-66, and Asp-139. Mg(2+) is bound by residues Asp-7, Glu-66, and Asp-139.

Belongs to the RuvC family. As to quaternary structure, homodimer which binds Holliday junction (HJ) DNA. The HJ becomes 2-fold symmetrical on binding to RuvC with unstacked arms; it has a different conformation from HJ DNA in complex with RuvA. In the full resolvosome a probable DNA-RuvA(4)-RuvB(12)-RuvC(2) complex forms which resolves the HJ. The cofactor is Mg(2+).

Its subcellular location is the cytoplasm. The enzyme catalyses Endonucleolytic cleavage at a junction such as a reciprocal single-stranded crossover between two homologous DNA duplexes (Holliday junction).. Its function is as follows. The RuvA-RuvB-RuvC complex processes Holliday junction (HJ) DNA during genetic recombination and DNA repair. Endonuclease that resolves HJ intermediates. Cleaves cruciform DNA by making single-stranded nicks across the HJ at symmetrical positions within the homologous arms, yielding a 5'-phosphate and a 3'-hydroxyl group; requires a central core of homology in the junction. The consensus cleavage sequence is 5'-(A/T)TT(C/G)-3'. Cleavage occurs on the 3'-side of the TT dinucleotide at the point of strand exchange. HJ branch migration catalyzed by RuvA-RuvB allows RuvC to scan DNA until it finds its consensus sequence, where it cleaves and resolves the cruciform DNA. In Helicobacter pylori (strain ATCC 700392 / 26695) (Campylobacter pylori), this protein is Crossover junction endodeoxyribonuclease RuvC.